The following is a 481-amino-acid chain: MSSDPHRKLHVVFFPFMAYGHMIPTLDMAKLFSSRGAKSTILTTPLNSKIFQKPIERFKNLNPSFEIDIQIFDFPCVDLGLPEGCENVDFFTSNNNDDRQYLTLKFFKSTRFFKDQLEKLLETTRPDCLIADMFFPWATEAAEKFNVPRLVFHGTGYFSLCSEYCIRVHNPQNIVASRYEPFVIPDLPGNIVITQEQIADRDEESEMGKFMIEVKESDVKSSGVIVNSFYELEPDYADFYKSVVLKRAWHIGPLSVYNRGFEEKAERGKKASINEVECLKWLDSKKPDSVIYISFGSVACFKNEQLFEIAAGLETSGANFIWVVRKNIGIEKEEWLPEGFEERVKGKGMIIRGWAPQVLILDHQATCGFVTHCGWNSLLEGVAAGLPMVTWPVAAEQFYNEKLVTQVLRTGVSVGAKKNVRTTGDFISREKVVKAVREVLVGEEADERRERAKKLAEMAKAAVEGGSSFNDLNSFIEEFTS.

Residue His-21 is the Proton acceptor of the active site. Residue His-21 coordinates an anthocyanidin. Asp-132 functions as the Charge relay in the catalytic mechanism. Ala-355, Gln-357, His-372, Trp-375, Asn-376, Ser-377, and Glu-380 together coordinate UDP-alpha-D-glucose. Residue Ala-395 coordinates an anthocyanidin. 2 residues coordinate UDP-alpha-D-glucose: Glu-396 and Gln-397.

It belongs to the UDP-glycosyltransferase family. As to expression, expressed in roots and flowers.

The catalysed reaction is a flavonol + UDP-alpha-D-glucose = a flavonol 3-O-beta-D-glucoside + UDP + H(+). In terms of biological role, possesses quercetin 3-O-glucosyltransferase activity in vitro. Also active in vitro on benzoates and benzoate derivatives. Involved in stress or defense responses. In Arabidopsis thaliana (Mouse-ear cress), this protein is UDP-glycosyltransferase 73B3 (UGT73B3).